The sequence spans 335 residues: NADP(+)-dependent glycerol-3-phosphate dehydrogenase (335 aa).

Gly-137 is a binding site for sn-glycerol 3-phosphate. Ala-141 lines the NADPH pocket. Residues Lys-192, Asp-250, Arg-259, and Asn-260 each contribute to the sn-glycerol 3-phosphate site. Lys-192 (proton acceptor) is an active-site residue. Arg-259 lines the NADPH pocket. NADPH-binding residues include Val-287 and Glu-289.

This sequence belongs to the NAD-dependent glycerol-3-phosphate dehydrogenase family. In terms of assembly, homodimer.

Its subcellular location is the cytoplasm. It catalyses the reaction sn-glycerol 3-phosphate + NADP(+) = dihydroxyacetone phosphate + NADPH + H(+). Its function is as follows. Catalyzes the reduction of the glycolytic intermediate dihydroxyacetone phosphate (DHAP) to sn-glycerol 3-phosphate (G3P). Shows a 15-fold preference for NADPH over NADH in the reduction process. Can also catalyze the reverse reaction in vitro. Shows no activity with dihydroxyacetone, glycerol, glycerol-2-phosphate, D-glyceraldehyde-3-phosphate, DL-glyceraldehyde, D-erythrose-4-phosphate, D-fructose-6-phosphate, beta-D-glucose-6-phosphate, or alpha-D-galactose-1-phosphate. In Archaeoglobus fulgidus (strain ATCC 49558 / DSM 4304 / JCM 9628 / NBRC 100126 / VC-16), this protein is NADP(+)-dependent glycerol-3-phosphate dehydrogenase.